A 211-amino-acid polypeptide reads, in one-letter code: Ras-related protein Rab-38 (211 aa).

The GTP site is built by Gly-19, Val-20, Gly-21, Lys-22, Thr-23, Ser-24, Ser-35, Ser-36, Tyr-38, and Thr-41. Thr-23 contacts Mg(2+). The short motif at 32–46 (QNFSSHYRATIGVDF) is the Switch 1 element. Mg(2+)-binding residues include Thr-41 and Asp-65. Gly-68, Lys-128, Asp-130, Ala-160, and Lys-161 together coordinate GTP. The short motif at 68–81 (GQERFGNMTRVYYR) is the Switch 2 element. Cys-205 carries S-palmitoyl cysteine lipidation. Cys-208 carries S-geranylgeranyl cysteine lipidation.

It belongs to the small GTPase superfamily. Rab family. In terms of assembly, interacts with ANKRD27. It depends on Mg(2+) as a cofactor.

It is found in the cell membrane. It localises to the cytoplasmic vesicle. The protein resides in the phagosome. Its subcellular location is the phagosome membrane. The protein localises to the melanosome. It is found in the melanosome membrane. The enzyme catalyses GTP + H2O = GDP + phosphate + H(+). With respect to regulation, regulated by guanine nucleotide exchange factors (GEFs) including the BLOC-3 complex composed of HPS1 and HPS4 which promote the exchange of bound GDP for free GTP. Regulated by GTPase activating proteins (GAPs) including SGSM2 which increase the GTP hydrolysis activity. Inhibited by GDP dissociation inhibitors (GDIs). The small GTPases Rab are key regulators of intracellular membrane trafficking, from the formation of transport vesicles to their fusion with membranes. Rabs cycle between an inactive GDP-bound form and an active GTP-bound form that is able to recruit to membranes different sets of downstream effectors directly responsible for vesicle formation, movement, tethering and fusion. RAB38 plays a role in the maturation of phagosomes that engulf pathogens, such as S.aureus and Mycobacterium. May be involved in melanosomal transport and docking. Involved in the proper sorting of TYRP1. Involved in peripheral melanosomal distribution of TYRP1 in melanocytes; the function, which probably is implicating vesicle-trafficking, includes cooperation with ANKRD27 and VAMP7. Plays an important role in the control of melanin production and melanosome biogenesis. In concert with RAB32, regulates the proper trafficking of melanogenic enzymes TYR, TYRP1 and DCT/TYRP2 to melanosomes in melanocytes. This chain is Ras-related protein Rab-38, found in Mus musculus (Mouse).